The chain runs to 673 residues: DNA ligase (673 aa).

Residues 34 to 38 (DAEYD), 83 to 84 (SL), and Glu116 contribute to the NAD(+) site. Catalysis depends on Lys118, which acts as the N6-AMP-lysine intermediate. Residues Arg139, Glu176, Lys293, and Lys317 each coordinate NAD(+). The Zn(2+) site is built by Cys411, Cys414, Cys429, and Cys435. The BRCT domain occupies 595-673 (NQQNPFFGKT…EDEFLKWVNS (79 aa)).

It belongs to the NAD-dependent DNA ligase family. LigA subfamily. Requires Mg(2+) as cofactor. Mn(2+) is required as a cofactor.

The catalysed reaction is NAD(+) + (deoxyribonucleotide)n-3'-hydroxyl + 5'-phospho-(deoxyribonucleotide)m = (deoxyribonucleotide)n+m + AMP + beta-nicotinamide D-nucleotide.. Functionally, DNA ligase that catalyzes the formation of phosphodiester linkages between 5'-phosphoryl and 3'-hydroxyl groups in double-stranded DNA using NAD as a coenzyme and as the energy source for the reaction. It is essential for DNA replication and repair of damaged DNA. The polypeptide is DNA ligase (Legionella pneumophila (strain Lens)).